We begin with the raw amino-acid sequence, 626 residues long: DNA primase (626 aa).

The CHC2-type zinc-finger motif lies at 39-63 (CPFHGEKTPSFSVSPEKQIFHCFGC). Positions 264–346 (EEITLMEGFM…DVFVLQLPAG (83 aa)) constitute a Toprim domain. Residues Glu270, Asp314, and Asp316 each contribute to the Mg(2+) site.

Belongs to the DnaG primase family. Monomer. Interacts with DnaB. Zn(2+) is required as a cofactor. Requires Mg(2+) as cofactor.

The catalysed reaction is ssDNA + n NTP = ssDNA/pppN(pN)n-1 hybrid + (n-1) diphosphate.. In terms of biological role, RNA polymerase that catalyzes the synthesis of short RNA molecules used as primers for DNA polymerase during DNA replication. This is DNA primase from Listeria innocua serovar 6a (strain ATCC BAA-680 / CLIP 11262).